The chain runs to 344 residues: Proline-rich transmembrane protein 2 (344 aa).

2 disordered regions span residues 1–220 (MAAS…GAPP) and 233–265 (GRAHGGHPGSPRGSLSRHPSSQLAGPGVEGGEG). Residues 1–272 (MAASSSEVSE…GEGTQKPRDY (272 aa)) lie on the Cytoplasmic side of the membrane. Residue S28 is modified to Phosphoserine. A compositionally biased stretch (low complexity) spans 69–82 (PETTETPVETPETV). T74 and T78 each carry phosphothreonine. Residues 124 to 143 (AEQQSAAPPEPTSEQALQLN) show a composition bias toward polar residues. Over residues 151–162 (TSQPPPKPPLQA) the composition is skewed to pro residues. The segment covering 168-178 (ENPTTEVLTES) has biased composition (polar residues). Pro residues predominate over residues 201–211 (APQPHSPPSTK). Phosphoserine is present on S242. An Omega-N-methylarginine modification is found at R244. 2 positions are modified to phosphoserine: S252 and S253. The helical intramembrane region spans 273-293 (IILAILSCFCPMWPVNIVAFA). Topologically, residues 294 to 321 (YAVMSRNSLQQGDVDGAQRLGRVAKLLS) are cytoplasmic. A helical transmembrane segment spans residues 322-342 (IVALVGGVLIIIASCVINLGV). At 343–344 (YK) the chain is on the extracellular side.

Belongs to the CD225/Dispanin family. In terms of assembly, component of the outer core of AMPAR complex. AMPAR complex consists of an inner core made of 4 pore-forming GluA/GRIA proteins (GRIA1, GRIA2, GRIA3 and GRIA4) and 4 major auxiliary subunits arranged in a twofold symmetry. One of the two pairs of distinct binding sites is occupied either by CNIH2, CNIH3 or CACNG2, CACNG3. The other harbors CACNG2, CACNG3, CACNG4, CACNG8 or GSG1L. This inner core of AMPAR complex is complemented by outer core constituents binding directly to the GluA/GRIA proteins at sites distinct from the interaction sites of the inner core constituents. Outer core constituents include at least PRRT1, PRRT2, CKAMP44/SHISA9, FRRS1L and NRN1. The proteins of the inner and outer core serve as a platform for other, more peripherally associated AMPAR constituents. Alone or in combination, these auxiliary subunits control the gating and pharmacology of the AMPAR complex and profoundly impact their biogenesis and protein processing. Interacts with intersectin 1/ITSN1. Interacts with SNARE complex components, including SNAP25, STX1A, SYT1 and SYT2; this interaction may inhibit SNARE complex formation. As to expression, neuron-specific expression throughout the brain, including hippocampus (at protein level).

The protein resides in the cell membrane. It is found in the presynaptic cell membrane. The protein localises to the synapse. Its subcellular location is the cell projection. It localises to the axon. The protein resides in the cytoplasmic vesicle. It is found in the secretory vesicle. The protein localises to the synaptic vesicle membrane. Its subcellular location is the postsynaptic density membrane. It localises to the dendritic spine. Functionally, as a component of the outer core of AMPAR complex, may be involved in synaptic transmission in the central nervous system. In hippocampal neurons, in presynaptic terminals, plays an important role in the final steps of neurotransmitter release, possibly by regulating Ca(2+)-sensing. In the cerebellum, may inhibit SNARE complex formation and down-regulate short-term facilitation. The sequence is that of Proline-rich transmembrane protein 2 (Prrt2) from Rattus norvegicus (Rat).